Here is a 146-residue protein sequence, read N- to C-terminus: Leghemoglobin 1 (146 aa).

The Globin domain maps to glycine 2–glycine 146. Tyrosine 29 is subject to Nitrated tyrosine. Serine 44 contacts heme b. Serine 44 is subject to Phosphoserine. Histidine 61 contributes to the O2 binding site. Lysine 64, histidine 93, and lysine 96 together coordinate heme b. Tyrosine 134 carries the nitrated tyrosine modification.

This sequence belongs to the plant globin family. As to quaternary structure, monomer. In terms of processing, nitrated in effective nodules and particularly in hypoxic conditions; this mechanism may play a protective role in the symbiosis by buffering toxic peroxynitrite NO(2)(-). Nitration level decrease during nodule senescence. Post-translationally, phosphorylation at Ser-44 disrupts the molecular environment of its porphyrin ring oxygen binding pocket, thus leading to a reduced oxygen consumption and to the delivery of oxygen O(2) to symbiosomes. As to expression, root nodules.

The protein resides in the cytoplasm. Its subcellular location is the cytosol. The protein localises to the nucleus. Its function is as follows. Leghemoglobin that reversibly binds oxygen O(2) through a pentacoordinated heme iron. In root nodules, facilitates the diffusion of oxygen to the bacteroids while preventing the bacterial nitrogenase from being inactivated by buffering dioxygen, nitric oxide and carbon monoxide, and promoting the formation of reactive oxygen species (ROS, e.g. H(2)O(2)). This role is essential for symbiotic nitrogen fixation (SNF). This is Leghemoglobin 1 from Medicago truncatula (Barrel medic).